A 388-amino-acid polypeptide reads, in one-letter code: Succinate--CoA ligase [ADP-forming] subunit beta (388 aa).

In terms of domain architecture, ATP-grasp spans 9–244; it reads KQLFAEYGLP…PSQDDAREAH (236 aa). Residues Lys-46, 53–55, Glu-99, Thr-102, and Glu-107 each bind ATP; that span reads GRG. Asn-199 and Asp-213 together coordinate Mg(2+). Residues Asn-264 and 321–323 contribute to the substrate site; that span reads GIV.

It belongs to the succinate/malate CoA ligase beta subunit family. Heterotetramer of two alpha and two beta subunits. Mg(2+) serves as cofactor.

It carries out the reaction succinate + ATP + CoA = succinyl-CoA + ADP + phosphate. The enzyme catalyses GTP + succinate + CoA = succinyl-CoA + GDP + phosphate. It functions in the pathway carbohydrate metabolism; tricarboxylic acid cycle; succinate from succinyl-CoA (ligase route): step 1/1. Succinyl-CoA synthetase functions in the citric acid cycle (TCA), coupling the hydrolysis of succinyl-CoA to the synthesis of either ATP or GTP and thus represents the only step of substrate-level phosphorylation in the TCA. The beta subunit provides nucleotide specificity of the enzyme and binds the substrate succinate, while the binding sites for coenzyme A and phosphate are found in the alpha subunit. The polypeptide is Succinate--CoA ligase [ADP-forming] subunit beta (Pseudomonas aeruginosa (strain LESB58)).